The chain runs to 289 residues: Acetyl-coenzyme A carboxylase carboxyl transferase subunit beta (289 aa).

One can recognise a CoA carboxyltransferase N-terminal domain in the interval 34–289 (MWVKCNKCGD…KLINMHQNSF (256 aa)). Zn(2+) contacts are provided by cysteine 38, cysteine 41, cysteine 57, and cysteine 60. The C4-type zinc finger occupies 38 to 60 (CNKCGDILYQNDLEKNYMVCNLC).

This sequence belongs to the AccD/PCCB family. Acetyl-CoA carboxylase is a heterohexamer composed of biotin carboxyl carrier protein (AccB), biotin carboxylase (AccC) and two subunits each of ACCase subunit alpha (AccA) and ACCase subunit beta (AccD). Zn(2+) serves as cofactor.

The protein localises to the cytoplasm. It carries out the reaction N(6)-carboxybiotinyl-L-lysyl-[protein] + acetyl-CoA = N(6)-biotinyl-L-lysyl-[protein] + malonyl-CoA. Its pathway is lipid metabolism; malonyl-CoA biosynthesis; malonyl-CoA from acetyl-CoA: step 1/1. In terms of biological role, component of the acetyl coenzyme A carboxylase (ACC) complex. Biotin carboxylase (BC) catalyzes the carboxylation of biotin on its carrier protein (BCCP) and then the CO(2) group is transferred by the transcarboxylase to acetyl-CoA to form malonyl-CoA. The sequence is that of Acetyl-coenzyme A carboxylase carboxyl transferase subunit beta from Clostridium botulinum (strain Langeland / NCTC 10281 / Type F).